Consider the following 377-residue polypeptide: Chaperone protein DnaJ (377 aa).

Residues 5 to 70 (DYYQVLGVAK…QKRAAYDQYG (66 aa)) form the J domain. Residues 137–215 (GYDTQIRVPS…CHGAGKTKET (79 aa)) form a CR-type zinc finger. Residues C150, C153, C167, C170, C189, C192, C203, and C206 each coordinate Zn(2+). CXXCXGXG motif repeat units follow at residues 150–157 (CEICHGSG), 167–174 (CPTCNGSG), 189–196 (CPKCHGTG), and 203–210 (CTHCHGAG).

This sequence belongs to the DnaJ family. In terms of assembly, homodimer. Zn(2+) is required as a cofactor.

The protein localises to the cytoplasm. Participates actively in the response to hyperosmotic and heat shock by preventing the aggregation of stress-denatured proteins and by disaggregating proteins, also in an autonomous, DnaK-independent fashion. Unfolded proteins bind initially to DnaJ; upon interaction with the DnaJ-bound protein, DnaK hydrolyzes its bound ATP, resulting in the formation of a stable complex. GrpE releases ADP from DnaK; ATP binding to DnaK triggers the release of the substrate protein, thus completing the reaction cycle. Several rounds of ATP-dependent interactions between DnaJ, DnaK and GrpE are required for fully efficient folding. Also involved, together with DnaK and GrpE, in the DNA replication of plasmids through activation of initiation proteins. This chain is Chaperone protein DnaJ, found in Paraburkholderia phymatum (strain DSM 17167 / CIP 108236 / LMG 21445 / STM815) (Burkholderia phymatum).